Here is a 462-residue protein sequence, read N- to C-terminus: UDP-N-acetylmuramoylalanine--D-glutamate ligase (462 aa).

117 to 123 (GTNGKTT) serves as a coordination point for ATP.

The protein belongs to the MurCDEF family.

It localises to the cytoplasm. It catalyses the reaction UDP-N-acetyl-alpha-D-muramoyl-L-alanine + D-glutamate + ATP = UDP-N-acetyl-alpha-D-muramoyl-L-alanyl-D-glutamate + ADP + phosphate + H(+). It participates in cell wall biogenesis; peptidoglycan biosynthesis. Its function is as follows. Cell wall formation. Catalyzes the addition of glutamate to the nucleotide precursor UDP-N-acetylmuramoyl-L-alanine (UMA). This chain is UDP-N-acetylmuramoylalanine--D-glutamate ligase, found in Synechococcus sp. (strain CC9902).